We begin with the raw amino-acid sequence, 443 residues long: Exodeoxyribonuclease 7 large subunit (443 aa).

It belongs to the XseA family. In terms of assembly, heterooligomer composed of large and small subunits.

The protein resides in the cytoplasm. It carries out the reaction Exonucleolytic cleavage in either 5'- to 3'- or 3'- to 5'-direction to yield nucleoside 5'-phosphates.. Bidirectionally degrades single-stranded DNA into large acid-insoluble oligonucleotides, which are then degraded further into small acid-soluble oligonucleotides. This Legionella pneumophila (strain Paris) protein is Exodeoxyribonuclease 7 large subunit.